A 579-amino-acid polypeptide reads, in one-letter code: CTP synthase (579 aa).

Residues 310–558 (YVELHDAYLS…VAAAIGCLDQ (249 aa)) form the Glutamine amidotransferase type-1 domain. Residues Cys402, His531, and Glu533 each act as for GATase activity in the active site.

This sequence belongs to the CTP synthase family.

The catalysed reaction is UTP + L-glutamine + ATP + H2O = CTP + L-glutamate + ADP + phosphate + 2 H(+). It functions in the pathway pyrimidine metabolism; CTP biosynthesis via de novo pathway; CTP from UDP: step 2/2. In terms of biological role, catalyzes the ATP-dependent amination of UTP to CTP with either L-glutamine or ammonia as the source of nitrogen. The sequence is that of CTP synthase (pyr-7) from Neurospora crassa (strain ATCC 24698 / 74-OR23-1A / CBS 708.71 / DSM 1257 / FGSC 987).